A 449-amino-acid chain; its full sequence is Ribulose bisphosphate carboxylase large chain (449 aa).

Positions 1-2 (MS) are excised as a propeptide. At Pro3 the chain carries N-acetylproline. An N6,N6,N6-trimethyllysine modification is found at Lys14. Residues Asn123 and Thr173 each contribute to the substrate site. The active-site Proton acceptor is Lys175. Lys177 is a binding site for substrate. Residues Lys201, Asp203, and Glu204 each contribute to the Mg(2+) site. Lys201 bears the N6-carboxylysine mark. His294 acts as the Proton acceptor in catalysis. Substrate contacts are provided by Arg295, His327, and Ser379.

This sequence belongs to the RuBisCO large chain family. Type I subfamily. In terms of assembly, heterohexadecamer of 8 large chains and 8 small chains; disulfide-linked. The disulfide link is formed within the large subunit homodimers. The cofactor is Mg(2+). The disulfide bond which can form in the large chain dimeric partners within the hexadecamer appears to be associated with oxidative stress and protein turnover.

Its subcellular location is the plastid. It is found in the chloroplast. The enzyme catalyses 2 (2R)-3-phosphoglycerate + 2 H(+) = D-ribulose 1,5-bisphosphate + CO2 + H2O. It catalyses the reaction D-ribulose 1,5-bisphosphate + O2 = 2-phosphoglycolate + (2R)-3-phosphoglycerate + 2 H(+). In terms of biological role, ruBisCO catalyzes two reactions: the carboxylation of D-ribulose 1,5-bisphosphate, the primary event in carbon dioxide fixation, as well as the oxidative fragmentation of the pentose substrate in the photorespiration process. Both reactions occur simultaneously and in competition at the same active site. The chain is Ribulose bisphosphate carboxylase large chain from Hippocratea richardiana.